We begin with the raw amino-acid sequence, 150 residues long: Troponin C, isotype gamma (150 aa).

Residue M1 is modified to N-acetylmethionine. EF-hand domains lie at 7–42, 43–78, 83–118, and 119–150; these read EQLS…MGVK, ISEK…FLIE, ALKA…LDNR, and LTED…MMSG. Ca(2+) is bound by residues D56, D58, S60, E62, and E67. Ca(2+)-binding residues include D132, D134, S136, T138, and E143.

The protein belongs to the troponin C family.

Troponin is the central regulatory protein of striated muscle contraction. Tn consists of three components: Tn-I which is the inhibitor of actomyosin ATPase, Tn-T which contains the binding site for tropomyosin and Tn-C. The binding of calcium to Tn-C abolishes the inhibitory action of Tn on actin filaments. The protein is Troponin C, isotype gamma of Astacus leptodactylus (Turkish narrow-clawed crayfish).